The primary structure comprises 30 residues: Cysteine-rich venom protein mossambin (30 aa).

Residues 1–30 (NVDFNSESTRRKKKQNEIVDLHNSLRRTVN) form a disordered region.

Belongs to the CRISP family. Contains 8 disulfide bonds. Expressed by the venom gland.

The protein resides in the secreted. Functionally, inhibits calcium-activated potassium channels (KCa), voltage-gated potassium channel (Kv), and the calcium release channel/ryanodine receptor (RyR). The protein is Cysteine-rich venom protein mossambin of Naja mossambica (Mozambique spitting cobra).